The sequence spans 493 residues: Putative BTB/POZ domain-containing protein L35 (493 aa).

Residues T16–D87 form the BTB domain.

The protein belongs to the mimivirus BTB/WD family.

This chain is Putative BTB/POZ domain-containing protein L35, found in Acanthamoeba polyphaga (Amoeba).